A 313-amino-acid polypeptide reads, in one-letter code: Solute carrier family 25 member 36 (313 aa).

Solcar repeat units lie at residues 4–110 (RDTL…CKEK), 118–205 (DSTQ…IKRK), and 226–310 (SDFV…VVYL). 6 helical membrane-spanning segments follow: residues 7–27 (LVHL…TCPL), 41–57 (LYIS…ASVN), 113–133 (NIFN…AGFT), 182–202 (MSAS…YESI), 228–248 (FVGM…IAYP), and 293–313 (QIPN…LLDG).

The protein belongs to the mitochondrial carrier (TC 2.A.29) family.

It is found in the mitochondrion inner membrane. Its function is as follows. Mitochondrial transporter that imports/exports pyrimidine nucleotides into and from mitochondria. Transports preferentially cytosine and uracil (deoxy)nucleoside mono-, di-, and triphosphates by uniport and antiport mechanism. This is Solute carrier family 25 member 36 (SLC25A36) from Gallus gallus (Chicken).